The sequence spans 256 residues: Probable S-methyl-5'-thioinosine phosphorylase (256 aa).

Phosphate is bound by residues Thr10 and 47–48 (RH). Met178 lines the substrate pocket. Thr179 lines the phosphate pocket. A substrate-binding site is contributed by 202–204 (NYA).

Belongs to the PNP/MTAP phosphorylase family. MTAP subfamily. As to quaternary structure, homotrimer.

The enzyme catalyses S-methyl-5'-thioinosine + phosphate = 5-(methylsulfanyl)-alpha-D-ribose 1-phosphate + hypoxanthine. The protein operates within purine metabolism; purine nucleoside salvage. In terms of biological role, catalyzes the reversible phosphorylation of S-methyl-5'-thioinosine (MTI) to hypoxanthine and 5-methylthioribose-1-phosphate. Involved in the breakdown of S-methyl-5'-thioadenosine (MTA), a major by-product of polyamine biosynthesis. Catabolism of (MTA) occurs via deamination to MTI and phosphorolysis to hypoxanthine. This is Probable S-methyl-5'-thioinosine phosphorylase from Methanopyrus kandleri (strain AV19 / DSM 6324 / JCM 9639 / NBRC 100938).